The following is a 368-amino-acid chain: MRFVDEATITVRAGNGGNGCVSFRREKFVPRGGPDGGDGGDGGSVILRASNRLLSLYDFRLQRNYEAPNGQGGMGSQCHGRKGDDLTVELPVGTQIYEVTEDGETLLCDLSDPETVFVVAQGGRGGKGNEHFKSSTNRAPRFAQKGETGEVRSLRLELKILADAGLLGLPNAGKSTFISKVSAARPKIAAYPFTTLIPNLGVMIDDADPEQRLVIADIPGLIEGAHTGQGLGHRFLKHVERTRFLVHILSVEDVSLDSPDGPWSGFDLINEELVRFDADLGQRVQLQVVNKIDLRDPEDVQALRDRAAADGRTVHFMSALTGEGVEDVVAEMWRMRDELDIHEALVRLRETEEFDEEESDIEVIWVRE.

The region spanning 1 to 161 (MRFVDEATIT…RSLRLELKIL (161 aa)) is the Obg domain. Residues 162 to 337 (ADAGLLGLPN…VVAEMWRMRD (176 aa)) enclose the OBG-type G domain. GTP contacts are provided by residues 168–175 (GLPNAGKS), 193–197 (FTTLI), 217–220 (DIPG), 290–293 (NKID), and 318–320 (SAL). Mg(2+) is bound by residues Ser175 and Thr195.

This sequence belongs to the TRAFAC class OBG-HflX-like GTPase superfamily. OBG GTPase family. As to quaternary structure, monomer. It depends on Mg(2+) as a cofactor.

The protein resides in the cytoplasm. Functionally, an essential GTPase which binds GTP, GDP and possibly (p)ppGpp with moderate affinity, with high nucleotide exchange rates and a fairly low GTP hydrolysis rate. Plays a role in control of the cell cycle, stress response, ribosome biogenesis and in those bacteria that undergo differentiation, in morphogenesis control. The polypeptide is GTPase Obg (Nitratidesulfovibrio vulgaris (strain DSM 19637 / Miyazaki F) (Desulfovibrio vulgaris)).